The chain runs to 243 residues: UDP-2,3-diacylglucosamine hydrolase (243 aa).

Mn(2+) contacts are provided by D9, H11, D42, N79, and H114. 79–80 serves as a coordination point for substrate; the sequence is NR. Residues D122, S160, N164, and H195 each coordinate substrate. Mn(2+)-binding residues include H195 and H197.

Belongs to the LpxH family. Mn(2+) serves as cofactor.

Its subcellular location is the cell inner membrane. It carries out the reaction UDP-2-N,3-O-bis[(3R)-3-hydroxytetradecanoyl]-alpha-D-glucosamine + H2O = 2-N,3-O-bis[(3R)-3-hydroxytetradecanoyl]-alpha-D-glucosaminyl 1-phosphate + UMP + 2 H(+). It participates in glycolipid biosynthesis; lipid IV(A) biosynthesis; lipid IV(A) from (3R)-3-hydroxytetradecanoyl-[acyl-carrier-protein] and UDP-N-acetyl-alpha-D-glucosamine: step 4/6. Hydrolyzes the pyrophosphate bond of UDP-2,3-diacylglucosamine to yield 2,3-diacylglucosamine 1-phosphate (lipid X) and UMP by catalyzing the attack of water at the alpha-P atom. Involved in the biosynthesis of lipid A, a phosphorylated glycolipid that anchors the lipopolysaccharide to the outer membrane of the cell. This is UDP-2,3-diacylglucosamine hydrolase from Coxiella burnetii (strain RSA 331 / Henzerling II).